The sequence spans 266 residues: E3 ubiquitin-protein ligase RNF170 (266 aa).

Residues 1–26 (MEGSVCVDGAAAPAPDEASLIEGVSN) lie on the Lumenal side of the membrane. A helical membrane pass occupies residues 27 to 47 (AVLLVLVLSVTLLAGLTTLLC). Over 48–209 (RSEQQRIHPE…GGLFWMFRVR (162 aa)) the chain is Cytoplasmic. The RING-type zinc finger occupies 88–131 (CPVCLQQAVLPVETNCGHLFCGSCIIAYWRYGTWLGAISCPICR). The helical transmembrane segment at 210 to 230 (ILLCVCGALAYLVSPLDFLPE) threads the bilayer. Residue G231 is a topological domain, lumenal. Residues 232–252 (VLGLLGFLDDFFVILLLFIYI) form a helical membrane-spanning segment. The Cytoplasmic segment spans residues 253-266 (SIMYREVVTQRLAG).

Highly expressed in the developing brain, and less within intersomitic structures of the trunk.

Its subcellular location is the endoplasmic reticulum membrane. It catalyses the reaction S-ubiquitinyl-[E2 ubiquitin-conjugating enzyme]-L-cysteine + [acceptor protein]-L-lysine = [E2 ubiquitin-conjugating enzyme]-L-cysteine + N(6)-ubiquitinyl-[acceptor protein]-L-lysine.. The protein operates within protein modification; protein ubiquitination. In terms of biological role, E3 ubiquitin-protein ligase that plays an essential role in stimulus-induced inositol 1,4,5-trisphosphate receptor (ITPR) ubiquitination and degradation via the endoplasmic reticulum-associated degradation (ERAD) pathway. Also involved in ITPR turnover in resting cells. The protein is E3 ubiquitin-protein ligase RNF170 (rnf170) of Danio rerio (Zebrafish).